The following is a 284-amino-acid chain: Bifunctional protein FolD (284 aa).

Residues 166–168 and Ile232 contribute to the NADP(+) site; that span reads GAS.

This sequence belongs to the tetrahydrofolate dehydrogenase/cyclohydrolase family. As to quaternary structure, homodimer.

It catalyses the reaction (6R)-5,10-methylene-5,6,7,8-tetrahydrofolate + NADP(+) = (6R)-5,10-methenyltetrahydrofolate + NADPH. It carries out the reaction (6R)-5,10-methenyltetrahydrofolate + H2O = (6R)-10-formyltetrahydrofolate + H(+). It participates in one-carbon metabolism; tetrahydrofolate interconversion. Functionally, catalyzes the oxidation of 5,10-methylenetetrahydrofolate to 5,10-methenyltetrahydrofolate and then the hydrolysis of 5,10-methenyltetrahydrofolate to 10-formyltetrahydrofolate. This chain is Bifunctional protein FolD, found in Shewanella oneidensis (strain ATCC 700550 / JCM 31522 / CIP 106686 / LMG 19005 / NCIMB 14063 / MR-1).